A 428-amino-acid polypeptide reads, in one-letter code: Glutamate-1-semialdehyde 2,1-aminomutase 1 (428 aa).

Position 267 is an N6-(pyridoxal phosphate)lysine (Lys267).

It belongs to the class-III pyridoxal-phosphate-dependent aminotransferase family. HemL subfamily. Homodimer. It depends on pyridoxal 5'-phosphate as a cofactor.

It localises to the cytoplasm. The enzyme catalyses (S)-4-amino-5-oxopentanoate = 5-aminolevulinate. It participates in porphyrin-containing compound metabolism; protoporphyrin-IX biosynthesis; 5-aminolevulinate from L-glutamyl-tRNA(Glu): step 2/2. In Staphylococcus aureus (strain NCTC 8325 / PS 47), this protein is Glutamate-1-semialdehyde 2,1-aminomutase 1 (hemL1).